Here is a 389-residue protein sequence, read N- to C-terminus: Aspartate aminotransferase (389 aa).

The L-aspartate site is built by G34 and N171. At K233 the chain carries N6-(pyridoxal phosphate)lysine. An L-aspartate-binding site is contributed by R362.

The protein belongs to the class-I pyridoxal-phosphate-dependent aminotransferase family. In terms of assembly, homodimer. Requires pyridoxal 5'-phosphate as cofactor.

The protein localises to the cytoplasm. The catalysed reaction is L-aspartate + 2-oxoglutarate = oxaloacetate + L-glutamate. This Pyrococcus abyssi (strain GE5 / Orsay) protein is Aspartate aminotransferase (aspC).